The primary structure comprises 250 residues: MRKPMVAGNWKMNGSLALVNDMGRALADVDCSAVDVLVCPPFPYIGPLRRAVPDESGVALGGQDVSRYDSGAYTGEVAGAMLAEMGCRHVIVGHSERRAMHAETDEVVVDKVQAALRAGLTPIVCVGETLEARDAGETEQVVGRQLDAVLELGGFVVEKLVLAYEPVWAIGTGRTASPEQAQAVHAFIRQRAADALGDELAQRLPILYGGSVKPGNARELFGCADVDGGLIGGASLDPDGFLEIISAARP.

9 to 11 contributes to the substrate binding site; sequence NWK. His94 serves as the catalytic Electrophile. Glu165 serves as the catalytic Proton acceptor. Residues Gly171, Ser211, and 232 to 233 each bind substrate; that span reads GG.

Belongs to the triosephosphate isomerase family. In terms of assembly, homodimer.

The protein resides in the cytoplasm. The catalysed reaction is D-glyceraldehyde 3-phosphate = dihydroxyacetone phosphate. It functions in the pathway carbohydrate biosynthesis; gluconeogenesis. It participates in carbohydrate degradation; glycolysis; D-glyceraldehyde 3-phosphate from glycerone phosphate: step 1/1. In terms of biological role, involved in the gluconeogenesis. Catalyzes stereospecifically the conversion of dihydroxyacetone phosphate (DHAP) to D-glyceraldehyde-3-phosphate (G3P). This chain is Triosephosphate isomerase, found in Alkalilimnicola ehrlichii (strain ATCC BAA-1101 / DSM 17681 / MLHE-1).